The primary structure comprises 388 residues: Reducing end xylose-releasing exo-oligoxylanase (388 aa).

Residue E70 is the Proton donor of the active site. Residue D263 is the Proton acceptor of the active site.

The protein belongs to the glycosyl hydrolase 8 (cellulase D) family.

It catalyses the reaction Hydrolysis of (1-&gt;4)-beta-D-xylose residues from the reducing end of oligosaccharides.. Its function is as follows. Hydrolyzes xylooligosaccharides with a degree of polymerization of greater than or equal to 3, releasing xylose from the reducing end. Only hydrolyzes the beta anomers of xylooligosaccharides, with inversion of anomeric configuration. Hydrolyzes the glucose and xylose-based trisaccharides where xylose is located at the -1 subsite, GXX, XXG and GXG. Does not hydrolyze xylan, chitosan, lichenan, curdlan or carboxymethylcellulose. The polypeptide is Reducing end xylose-releasing exo-oligoxylanase (Halalkalibacterium halodurans (strain ATCC BAA-125 / DSM 18197 / FERM 7344 / JCM 9153 / C-125) (Bacillus halodurans)).